The primary structure comprises 148 residues: Troponin C (148 aa).

4 EF-hand domains span residues 8 to 43 (KQFN…LALH), 44 to 79 (VSDD…KVQE), 81 to 116 (EDER…LGDD), and 117 to 148 (LNDD…LMLG). Ca(2+) is bound by residues D130, D132, S134, T136, and E141.

Belongs to the troponin C family.

Its function is as follows. Troponin is the central regulatory protein of striated muscle contraction. Tn consists of three components: Tn-I which is the inhibitor of actomyosin ATPase, Tn-T which contains the binding site for tropomyosin and Tn-C. The binding of calcium to Tn-C abolishes the inhibitory action of Tn on actin filaments. This chain is Troponin C, found in Todarodes pacificus (Japanese flying squid).